A 132-amino-acid chain; its full sequence is Large ribosomal subunit protein uL14 (132 aa).

The protein belongs to the universal ribosomal protein uL14 family. As to quaternary structure, part of the 50S ribosomal subunit. Forms a cluster with proteins L3 and L24e, part of which may contact the 16S rRNA in 2 intersubunit bridges.

In terms of biological role, binds to 23S rRNA. Forms part of two intersubunit bridges in the 70S ribosome. This Methanocella arvoryzae (strain DSM 22066 / NBRC 105507 / MRE50) protein is Large ribosomal subunit protein uL14.